The primary structure comprises 523 residues: GMP synthase [glutamine-hydrolyzing] (523 aa).

The 198-residue stretch at 8-205 (KILILDFGSQ…VVDICGCETN (198 aa)) folds into the Glutamine amidotransferase type-1 domain. Residue cysteine 85 is the Nucleophile of the active site. Catalysis depends on residues histidine 179 and glutamate 181. The 193-residue stretch at 206-398 (WTAENIIEDA…LGLPAEMLNR (193 aa)) folds into the GMPS ATP-PPase domain. 233–239 (SGGVDSS) is a binding site for ATP.

As to quaternary structure, homodimer.

It catalyses the reaction XMP + L-glutamine + ATP + H2O = GMP + L-glutamate + AMP + diphosphate + 2 H(+). Its pathway is purine metabolism; GMP biosynthesis; GMP from XMP (L-Gln route): step 1/1. Functionally, catalyzes the synthesis of GMP from XMP. The sequence is that of GMP synthase [glutamine-hydrolyzing] from Histophilus somni (strain 129Pt) (Haemophilus somnus).